A 1491-amino-acid polypeptide reads, in one-letter code: Chromosome partition protein MukB (1491 aa).

34 to 41 (GGNGAGKS) provides a ligand contact to ATP. Coiled coils occupy residues 302 to 418 (LIEQ…QYQQ), 488 to 600 (EVAR…RFES), 638 to 666 (ELEK…RLAS), 781 to 806 (RAAR…AKAS), 836 to 1109 (EQAL…DLRT), and 1210 to 1239 (VEAI…ISSD). The flexible hinge stretch occupies residues 667–784 (PGGSNDPRLK…AIPLFGRAAR (118 aa)). A disordered region spans residues 1059–1080 (QRRRDELQERLHTSRSRKSEYE).

The protein belongs to the SMC family. MukB subfamily. As to quaternary structure, homodimerization via its hinge domain. Binds to DNA via its C-terminal region. Interacts, and probably forms a ternary complex, with MukE and MukF via its C-terminal region. The complex formation is stimulated by calcium or magnesium. Interacts with tubulin-related protein FtsZ.

Its subcellular location is the cytoplasm. The protein resides in the nucleoid. Plays a central role in chromosome condensation, segregation and cell cycle progression. Functions as a homodimer, which is essential for chromosome partition. Involved in negative DNA supercoiling in vivo, and by this means organize and compact chromosomes. May achieve or facilitate chromosome segregation by condensation DNA from both sides of a centrally located replisome during cell division. This is Chromosome partition protein MukB from Vibrio cholerae serotype O1 (strain ATCC 39541 / Classical Ogawa 395 / O395).